Here is a 129-residue protein sequence, read N- to C-terminus: Azurin-1 (129 aa).

Residues 1–129 (AECSVDIAGN…LMKGVLKLVD (129 aa)) enclose the Plastocyanin-like domain. A disulfide bridge links C3 with C26. The Cu cation site is built by H46, C112, H117, and M121.

Its subcellular location is the periplasm. Its function is as follows. Transfers electrons from cytochrome c551 to cytochrome oxidase. This Alcaligenes xylosoxydans xylosoxydans (Achromobacter xylosoxidans) protein is Azurin-1.